The following is a 397-amino-acid chain: Chorismate synthase (397 aa).

2 residues coordinate NADP(+): arginine 40 and arginine 46. Residues 129–131 (RSS), 257–258 (QA), glycine 302, 317–321 (KPISS), and arginine 343 contribute to the FMN site.

The protein belongs to the chorismate synthase family. As to quaternary structure, homotetramer. The cofactor is FMNH2.

It catalyses the reaction 5-O-(1-carboxyvinyl)-3-phosphoshikimate = chorismate + phosphate. The protein operates within metabolic intermediate biosynthesis; chorismate biosynthesis; chorismate from D-erythrose 4-phosphate and phosphoenolpyruvate: step 7/7. Catalyzes the anti-1,4-elimination of the C-3 phosphate and the C-6 proR hydrogen from 5-enolpyruvylshikimate-3-phosphate (EPSP) to yield chorismate, which is the branch point compound that serves as the starting substrate for the three terminal pathways of aromatic amino acid biosynthesis. This reaction introduces a second double bond into the aromatic ring system. This is Chorismate synthase from Pelodictyon phaeoclathratiforme (strain DSM 5477 / BU-1).